Reading from the N-terminus, the 150-residue chain is MQIILLDKVVNLGNLGEVVRVKDGYARNFLIPSGRARRATASAKQEFEAKRAELEKAAAAKLAESQTVGEKLAGTTCKLTQKAGVDGRLFGSVTNADIAEELTKTGFKVTKAQIRMPNGPIKVVGDSKVSVALHTDVLVEITVSVYGETA.

Belongs to the bacterial ribosomal protein bL9 family.

In terms of biological role, binds to the 23S rRNA. The polypeptide is Large ribosomal subunit protein bL9 (Albidiferax ferrireducens (strain ATCC BAA-621 / DSM 15236 / T118) (Rhodoferax ferrireducens)).